The chain runs to 908 residues: Hyphal wall protein 2 (908 aa).

The N-terminal stretch at 1 to 20 is a signal peptide; the sequence is MRFATTQLATLACFILTAEA. Low complexity-rich tracts occupy residues 110–187, 266–324, and 332–405; these read PKTA…TTSK, ESTT…TMKH, and HATT…KSST. Disordered stretches follow at residues 110 to 221 and 263 to 477; these read PKTA…PSKT and TETE…IPKY. Positions 406–416 are enriched in polar residues; the sequence is PASTLEYSTSI. Residues 422–477 show a composition bias toward low complexity; that stretch reads TTSNSLSTKSTTLTTISRSSTSGSSVPNTTRESSTSTTTPNSSSSESKVSSAIPKY. 3 N-linked (GlcNAc...) asparagine glycosylation sites follow: asparagine 449, asparagine 462, and asparagine 519. Residues 539 to 608 show a composition bias toward low complexity; the sequence is GTTVRSSTSE…TSTTTPESSP (70 aa). The segment at 539 to 700 is disordered; that stretch reads GTTVRSSTSE…TSASETSSGS (162 aa). Positions 624–638 are enriched in polar residues; sequence TMESSASTTKNSSIQ. Asparagine 634 is a glycosylation site (N-linked (GlcNAc...) asparagine). 2 stretches are compositionally biased toward low complexity: residues 639-655 and 662-677; these read STSE…ESSV and SSVP…VVTT. N-linked (GlcNAc...) asparagine glycosylation is present at asparagine 684. Positions 685–700 are enriched in low complexity; sequence TTLEHSTSASETSSGS. The N-linked (GlcNAc...) asparagine glycan is linked to asparagine 764. Residues 821-844 are disordered; sequence VSTDVKPTTSSQGTKSTPVDTDSK. Glycine 887 carries the GPI-anchor amidated glycine lipid modification. Residues 888–908 constitute a propeptide, removed in mature form; sequence TGNNMKLSFGVVIAGVAAFAI.

The GPI-anchor is attached to the protein in the endoplasmic reticulum and serves to target the protein to the cell surface. There, the glucosamine-inositol phospholipid moiety is cleaved off and the GPI-modified mannoprotein is covalently attached via its lipidless GPI glycan remnant to the 1,6-beta-glucan of the outer cell wall layer.

It is found in the secreted. It localises to the cell wall. The protein localises to the membrane. Functionally, GPI-anchored cell wall protein required for mating efficiency, biofilm formation, adhesion, filamentous growth, and oxidative stress tolerance. Involved in normal disseminated infection in a mouse systemic candidiasis model. In Candida albicans (strain SC5314 / ATCC MYA-2876) (Yeast), this protein is Hyphal wall protein 2 (HWP2).